The primary structure comprises 224 residues: UPF0758 protein CBUD_1789 (224 aa).

Positions 102–224 (QLGCTQDAQQ…SFSFAESGLL (123 aa)) constitute an MPN domain. Residues histidine 173, histidine 175, and aspartate 186 each contribute to the Zn(2+) site. Positions 173-186 (HNHPSGVPDPSQAD) match the JAMM motif motif.

The protein belongs to the UPF0758 family.

The protein is UPF0758 protein CBUD_1789 of Coxiella burnetii (strain Dugway 5J108-111).